A 355-amino-acid chain; its full sequence is S-adenosylmethionine:tRNA ribosyltransferase-isomerase (355 aa).

Belongs to the QueA family. As to quaternary structure, monomer.

The protein localises to the cytoplasm. The catalysed reaction is 7-aminomethyl-7-carbaguanosine(34) in tRNA + S-adenosyl-L-methionine = epoxyqueuosine(34) in tRNA + adenine + L-methionine + 2 H(+). It participates in tRNA modification; tRNA-queuosine biosynthesis. Transfers and isomerizes the ribose moiety from AdoMet to the 7-aminomethyl group of 7-deazaguanine (preQ1-tRNA) to give epoxyqueuosine (oQ-tRNA). The chain is S-adenosylmethionine:tRNA ribosyltransferase-isomerase from Burkholderia orbicola (strain AU 1054).